A 501-amino-acid polypeptide reads, in one-letter code: Atypical kinase COQ8, mitochondrial (501 aa).

A mitochondrion-targeting transit peptide spans 1 to 29; the sequence is MVTNMVKLRNLRRLYCSSRLLRTIQNGRI. Positions 41–69 are disordered; it reads YTTKSAKEGEENVERKHEEEKKDTLKSSS. Residues 45–65 show a composition bias toward basic and acidic residues; sequence SAKEGEENVERKHEEEKKDTL. Positions 134 to 137 match the KxGQ motif motif; that stretch reads KIGQ. In terms of domain architecture, Protein kinase spans 188 to 501; it reads KFDKIPMAAA…LFKEIFAYKV (314 aa). The AAAS motif signature appears at 195-198; that stretch reads AAAS. Residues Ser-198, Lys-216, and 303–306 each bind ATP; that span reads MTRM. Asp-346 (proton acceptor) is an active-site residue. Asn-351 and Asp-365 together coordinate ATP.

The protein belongs to the protein kinase superfamily. ADCK protein kinase family. In terms of assembly, forms homopolymers. Predominantly associated with a complex of about 500 kDa.

It localises to the mitochondrion inner membrane. It functions in the pathway cofactor biosynthesis; ubiquinone biosynthesis. Atypical kinase involved in the biosynthesis of coenzyme Q, also named ubiquinone, an essential lipid-soluble electron transporter for aerobic cellular respiration. Its substrate specificity is still unclear: may act as a protein kinase that mediates phosphorylation of COQ3, COQ5 and/or COQ7. According to other reports, acts as a small molecule kinase, possibly a lipid kinase that phosphorylates a prenyl lipid in the ubiquinone biosynthesis pathway, as suggested by its ability to bind coenzyme Q lipid intermediates. This Saccharomyces cerevisiae (strain ATCC 204508 / S288c) (Baker's yeast) protein is Atypical kinase COQ8, mitochondrial (COQ8).